A 466-amino-acid chain; its full sequence is MDNNRVAPEIPGLRQPGQITNDIRMLMCKLLNSAKPANTFPGSQPVSFHLADIEEKLLAQDYYVCEKTDGLRALMLIMVNPVTKEQGCFMIDRENNYYMVNGFRFPCLPRANKKELLETLQDGTLIDGELVMQTNPVTKLKELRYLMFDCLAVNGRSLVQSPTSSRLAHLGKEFFKPYYDLRSYFPDRCSTFPFKISMKHMNFSYDLAKVAKTLDSLPHVSDGLIFTPVQAAYHIGGKDSYLLKWKPEVENTVDFKLIIEPPVVEDKSLPKSDKNRFYYNYDVKPLFHLYVWQGGNDVNNRIQDFEQPFTKSDLELLERTYRKFAEIEIDDKQWNELKAMEEPLNGRIVECSKDQESGAWKLLRFRDDKLNGNHVSVVQKVLESIGDSVSLDDLEQVVDEMRSRWKEREQGLKNAQKQFNHQASARSSLSQQHSTEPEQSQDQPKYVDDDDDNWSDDEPDTKRQKI.

K67 (N6-GMP-lysine intermediate) is an active-site residue. Residues 408–466 (REQGLKNAQKQFNHQASARSSLSQQHSTEPEQSQDQPKYVDDDDDNWSDDEPDTKRQKI) are disordered. A compositionally biased stretch (polar residues) spans 413–443 (KNAQKQFNHQASARSSLSQQHSTEPEQSQDQ). Residues 448–459 (DDDDDNWSDDEP) show a composition bias toward acidic residues.

This sequence belongs to the eukaryotic GTase family. Heterodimer. The mRNA-capping enzyme is composed of two separate chains alpha and beta, respectively a mRNA guanylyltransferase and an mRNA 5'-triphosphate monophosphatase.

It is found in the nucleus. It catalyses the reaction a 5'-end diphospho-ribonucleoside in mRNA + GTP + H(+) = a 5'-end (5'-triphosphoguanosine)-ribonucleoside in mRNA + diphosphate. In terms of biological role, second step of mRNA capping. Transfer of the GMP moiety of GTP to the 5'-end of RNA via an enzyme-GMP covalent reaction intermediate. This is mRNA-capping enzyme subunit alpha (CEG1) from Kluyveromyces lactis (strain ATCC 8585 / CBS 2359 / DSM 70799 / NBRC 1267 / NRRL Y-1140 / WM37) (Yeast).